The sequence spans 279 residues: Putative pyruvate, phosphate dikinase regulatory protein (279 aa).

153 to 160 (GISRTSKT) is an ADP binding site.

Belongs to the pyruvate, phosphate/water dikinase regulatory protein family. PDRP subfamily.

It catalyses the reaction N(tele)-phospho-L-histidyl/L-threonyl-[pyruvate, phosphate dikinase] + ADP = N(tele)-phospho-L-histidyl/O-phospho-L-threonyl-[pyruvate, phosphate dikinase] + AMP + H(+). It carries out the reaction N(tele)-phospho-L-histidyl/O-phospho-L-threonyl-[pyruvate, phosphate dikinase] + phosphate + H(+) = N(tele)-phospho-L-histidyl/L-threonyl-[pyruvate, phosphate dikinase] + diphosphate. Bifunctional serine/threonine kinase and phosphorylase involved in the regulation of the pyruvate, phosphate dikinase (PPDK) by catalyzing its phosphorylation/dephosphorylation. This is Putative pyruvate, phosphate dikinase regulatory protein from Brucella melitensis biotype 2 (strain ATCC 23457).